A 1073-amino-acid chain; its full sequence is DNA-directed RNA polymerase subunit beta (1073 aa).

It belongs to the RNA polymerase beta chain family. As to quaternary structure, in plastids the minimal PEP RNA polymerase catalytic core is composed of four subunits: alpha, beta, beta', and beta''. When a (nuclear-encoded) sigma factor is associated with the core the holoenzyme is formed, which can initiate transcription.

The protein localises to the plastid. Its subcellular location is the chloroplast. The catalysed reaction is RNA(n) + a ribonucleoside 5'-triphosphate = RNA(n+1) + diphosphate. In terms of biological role, DNA-dependent RNA polymerase catalyzes the transcription of DNA into RNA using the four ribonucleoside triphosphates as substrates. The sequence is that of DNA-directed RNA polymerase subunit beta from Aethionema grandiflorum (Persian stone-cress).